The sequence spans 288 residues: N-glycosylase/DNA lyase (288 aa).

Residues Gln35, Ser62, and Trp73 each contribute to the 8-oxoguanine site. Residues 134 to 203 (NPLVLVERPS…VACASISSEM (70 aa)) are helix-hairpin-helix. The Schiff-base intermediate with DNA role is filled by Lys160. 2 residues coordinate 8-oxoguanine: Phe164 and Pro189. Residue Asp191 is part of the active site. 8-oxoguanine contacts are provided by Asp238 and Trp242.

The protein belongs to the archaeal N-glycosylase/DNA lyase (AGOG) family.

It carries out the reaction 2'-deoxyribonucleotide-(2'-deoxyribose 5'-phosphate)-2'-deoxyribonucleotide-DNA = a 3'-end 2'-deoxyribonucleotide-(2,3-dehydro-2,3-deoxyribose 5'-phosphate)-DNA + a 5'-end 5'-phospho-2'-deoxyribonucleoside-DNA + H(+). Its function is as follows. DNA repair enzyme that is part of the base excision repair (BER) pathway; protects from oxidative damage by removing the major product of DNA oxidation, 8-oxoguanine (GO), from single- and double-stranded DNA substrates. The sequence is that of N-glycosylase/DNA lyase from Aeropyrum pernix (strain ATCC 700893 / DSM 11879 / JCM 9820 / NBRC 100138 / K1).